A 209-amino-acid chain; its full sequence is Large ribosomal subunit protein uL3 (209 aa).

The disordered stretch occupies residues 118–151 (GFQGAIKRHGQSRGPMSHGSRYHRRPGSMGPVAP).

It belongs to the universal ribosomal protein uL3 family. As to quaternary structure, part of the 50S ribosomal subunit. Forms a cluster with proteins L14 and L19.

Functionally, one of the primary rRNA binding proteins, it binds directly near the 3'-end of the 23S rRNA, where it nucleates assembly of the 50S subunit. This is Large ribosomal subunit protein uL3 from Enterococcus faecalis (strain ATCC 700802 / V583).